We begin with the raw amino-acid sequence, 986 residues long: Translation initiation factor IF-2 (986 aa).

A disordered region spans residues 95-394 (TFVRRDETSA…GRGKHQDQNT (300 aa)). Residues 122–182 (ELQRREEEAR…EEEAAKKRAA (61 aa)) show a composition bias toward basic and acidic residues. A compositionally biased stretch (low complexity) spans 183 to 222 (AEAAAREQAQAAKPAQAAQPAAAKAEPVAAKAAEPAVAKQ). Positions 228–277 (ERAAAERAAQREAAKKAEDAARQAAEKARAEQEQIAKRRAAAEAEARAIR) are enriched in basic and acidic residues. Residues 320–342 (APSRPAAKKPAAAAPAATTTPSA) are compositionally biased toward low complexity. Residues 371–384 (TSGGVDRGWRGGPK) show a composition bias toward gly residues. The 170-residue stretch at 486 to 655 (PRPPVVTVMG…LLQAEVLELK (170 aa)) folds into the tr-type G domain. Residues 495-502 (GHVDHGKT) form a G1 region. Position 495 to 502 (495 to 502 (GHVDHGKT)) interacts with GTP. The tract at residues 520 to 524 (GITQH) is G2. The tract at residues 541 to 544 (DTPG) is G3. GTP contacts are provided by residues 541 to 545 (DTPGH) and 595 to 598 (NKID). A G4 region spans residues 595–598 (NKID). The tract at residues 631-633 (SAK) is G5.

It belongs to the TRAFAC class translation factor GTPase superfamily. Classic translation factor GTPase family. IF-2 subfamily.

The protein localises to the cytoplasm. Its function is as follows. One of the essential components for the initiation of protein synthesis. Protects formylmethionyl-tRNA from spontaneous hydrolysis and promotes its binding to the 30S ribosomal subunits. Also involved in the hydrolysis of GTP during the formation of the 70S ribosomal complex. The sequence is that of Translation initiation factor IF-2 from Paraburkholderia phytofirmans (strain DSM 17436 / LMG 22146 / PsJN) (Burkholderia phytofirmans).